A 302-amino-acid polypeptide reads, in one-letter code: Deubiquitinase OTUD6B (302 aa).

Residues 1-10 (MEGSEDEEAE) show a composition bias toward acidic residues. Disordered stretches follow at residues 1–52 (MEGS…KQLA) and 99–121 (EQQIQHPRISKAQKRREKKAALE). Over residues 106–116 (RISKAQKRREK) the composition is skewed to basic residues. The 138-residue stretch at 156-293 (LEIKQIPSDG…GEHYNSVKLL (138 aa)) folds into the OTU domain. The cys-loop stretch occupies residues 161–167 (IPSDGHC). The active site involves aspartate 164. The active-site Nucleophile is cysteine 167. The variable-loop stretch occupies residues 228–238 (IANTAAWGGQL). The tract at residues 276–286 (YMRHAYGLGEH) is his-loop. Residue histidine 286 is part of the active site.

The enzyme catalyses Thiol-dependent hydrolysis of ester, thioester, amide, peptide and isopeptide bonds formed by the C-terminal Gly of ubiquitin (a 76-residue protein attached to proteins as an intracellular targeting signal).. In terms of biological role, deubiquitinating enzyme that may play a role in the ubiquitin-dependent regulation of different cellular processes. The sequence is that of Deubiquitinase OTUD6B (OTUD6B) from Gallus gallus (Chicken).